Consider the following 71-residue polypeptide: UPF0435 protein BLi00816/BL03111 (71 aa).

This sequence belongs to the UPF0435 family.

The sequence is that of UPF0435 protein BLi00816/BL03111 from Bacillus licheniformis (strain ATCC 14580 / DSM 13 / JCM 2505 / CCUG 7422 / NBRC 12200 / NCIMB 9375 / NCTC 10341 / NRRL NRS-1264 / Gibson 46).